The sequence spans 201 residues: 3-isopropylmalate dehydratase small subunit (201 aa).

It belongs to the LeuD family. LeuD type 1 subfamily. In terms of assembly, heterodimer of LeuC and LeuD.

It catalyses the reaction (2R,3S)-3-isopropylmalate = (2S)-2-isopropylmalate. The protein operates within amino-acid biosynthesis; L-leucine biosynthesis; L-leucine from 3-methyl-2-oxobutanoate: step 2/4. Its function is as follows. Catalyzes the isomerization between 2-isopropylmalate and 3-isopropylmalate, via the formation of 2-isopropylmaleate. This is 3-isopropylmalate dehydratase small subunit from Jannaschia sp. (strain CCS1).